A 64-amino-acid polypeptide reads, in one-letter code: Metallothionein-A (64 aa).

The protein belongs to the metallothionein superfamily. Type 4 family.

Functionally, metallothioneins have a high content of cysteine residues that bind various heavy metals. The protein is Metallothionein-A (MTA) of Strongylocentrotus purpuratus (Purple sea urchin).